Reading from the N-terminus, the 132-residue chain is Small ribosomal subunit protein uS8 (132 aa).

The protein belongs to the universal ribosomal protein uS8 family. In terms of assembly, part of the 30S ribosomal subunit. Contacts proteins S5 and S12.

Its function is as follows. One of the primary rRNA binding proteins, it binds directly to 16S rRNA central domain where it helps coordinate assembly of the platform of the 30S subunit. The chain is Small ribosomal subunit protein uS8 from Mycobacterium bovis (strain ATCC BAA-935 / AF2122/97).